We begin with the raw amino-acid sequence, 68 residues long: Copper transport protein ATOX1 (68 aa).

Positions 1–63 (MPKHEFSVDM…TLNKTGKAVS (63 aa)) constitute an HMA domain. 2 residues coordinate Cu cation: Cys-12 and Cys-15. The residue at position 47 (Ser-47) is a Phosphoserine. Residue Lys-60 is modified to N6-acetyllysine.

Belongs to the ATX1 family. In terms of assembly, homodimer. Interacts with ATP7B. Interacts with ATP7A. Interacts (via dimer form) with SLC31A1 (via C-terminal domain); this interaction improves ATOX1 stability and controls intracellular Cu(I) levels.

Functionally, binds and deliver cytosolic copper to the copper ATPase proteins. May be important in cellular antioxidant defense. The sequence is that of Copper transport protein ATOX1 from Mus musculus (Mouse).